The chain runs to 371 residues: Lombricine kinase (371 aa).

A Phosphagen kinase N-terminal domain is found at 1–86; sequence MPKFTARQNF…FDAVINEKHG (86 aa). In terms of domain architecture, Phosphagen kinase C-terminal spans 113 to 355; it reads YVKSARIRTG…GKLIEYEKLL (243 aa). Residues 116–120, histidine 179, arginine 224, arginine 280, 308–313, and aspartate 323 each bind ATP; these read SARIR and RGTGGE.

Belongs to the ATP:guanido phosphotransferase family. In terms of assembly, homodimer.

The enzyme catalyses L-lombricine + ATP = N-phospho-L-lombricine + ADP + H(+). The chain is Lombricine kinase from Eisenia fetida (Red wiggler worm).